The following is a 145-amino-acid chain: Secreted LysM effector Vd2LysM (145 aa).

Residues 1 to 18 form the signal peptide; it reads MRPDVFVLFTAFLGPAAA. 2 LysM domains span residues 31 to 75 and 96 to 140; these read GWYI…KIKV and GWYH…DIVV.

The protein belongs to the secreted LysM effector family. As to quaternary structure, forms homodimers in a chitin-independent manner through interactions at the N-termini of EPL2 monomers. Homodimers are further polymerized in a chitin-dependent manner.

Functionally, secreted effector that enables the plant pathogenic fungus to manipulate host defenses for successful infection. Binds chitin, suppresses chitin-induced immune responses and protects hyphae against degradation by plant hydrolytic enzymes. Chitin-induced polymerization of homodimers forms a contiguous ELP2 highly oligomeric super-complexe that may precipitate at infection sites to eliminate chitin oligomers, and thus suppress the activation of chitin-induced plant immunity. The sequence is that of Secreted LysM effector Vd2LysM from Verticillium dahliae (strain VdLs.17 / ATCC MYA-4575 / FGSC 10137) (Verticillium wilt).